The sequence spans 75 residues: Large ribosomal subunit protein bL31 (75 aa).

Zn(2+) is bound by residues C16, C18, C36, and C39.

Belongs to the bacterial ribosomal protein bL31 family. Type A subfamily. In terms of assembly, part of the 50S ribosomal subunit. Zn(2+) serves as cofactor.

Functionally, binds the 23S rRNA. This Desulforapulum autotrophicum (strain ATCC 43914 / DSM 3382 / VKM B-1955 / HRM2) (Desulfobacterium autotrophicum) protein is Large ribosomal subunit protein bL31.